The following is a 214-amino-acid chain: Probable transaldolase (214 aa).

The Schiff-base intermediate with substrate role is filled by lysine 83.

This sequence belongs to the transaldolase family. Type 3B subfamily.

It is found in the cytoplasm. The catalysed reaction is D-sedoheptulose 7-phosphate + D-glyceraldehyde 3-phosphate = D-erythrose 4-phosphate + beta-D-fructose 6-phosphate. Its pathway is carbohydrate degradation; pentose phosphate pathway; D-glyceraldehyde 3-phosphate and beta-D-fructose 6-phosphate from D-ribose 5-phosphate and D-xylulose 5-phosphate (non-oxidative stage): step 2/3. Functionally, transaldolase is important for the balance of metabolites in the pentose-phosphate pathway. The protein is Probable transaldolase of Leptospira biflexa serovar Patoc (strain Patoc 1 / Ames).